The following is a 292-amino-acid chain: Phosphatidylserine decarboxylase proenzyme (292 aa).

Catalysis depends on charge relay system; for autoendoproteolytic cleavage activity residues Asp89, His146, and Ser252. Ser252 (schiff-base intermediate with substrate; via pyruvic acid; for decarboxylase activity) is an active-site residue. Ser252 carries the pyruvic acid (Ser); by autocatalysis modification.

This sequence belongs to the phosphatidylserine decarboxylase family. PSD-B subfamily. Prokaryotic type I sub-subfamily. As to quaternary structure, heterodimer of a large membrane-associated beta subunit and a small pyruvoyl-containing alpha subunit. Pyruvate is required as a cofactor. In terms of processing, is synthesized initially as an inactive proenzyme. Formation of the active enzyme involves a self-maturation process in which the active site pyruvoyl group is generated from an internal serine residue via an autocatalytic post-translational modification. Two non-identical subunits are generated from the proenzyme in this reaction, and the pyruvate is formed at the N-terminus of the alpha chain, which is derived from the carboxyl end of the proenzyme. The autoendoproteolytic cleavage occurs by a canonical serine protease mechanism, in which the side chain hydroxyl group of the serine supplies its oxygen atom to form the C-terminus of the beta chain, while the remainder of the serine residue undergoes an oxidative deamination to produce ammonia and the pyruvoyl prosthetic group on the alpha chain. During this reaction, the Ser that is part of the protease active site of the proenzyme becomes the pyruvoyl prosthetic group, which constitutes an essential element of the active site of the mature decarboxylase.

Its subcellular location is the cell membrane. It catalyses the reaction a 1,2-diacyl-sn-glycero-3-phospho-L-serine + H(+) = a 1,2-diacyl-sn-glycero-3-phosphoethanolamine + CO2. Its pathway is phospholipid metabolism; phosphatidylethanolamine biosynthesis; phosphatidylethanolamine from CDP-diacylglycerol: step 2/2. Catalyzes the formation of phosphatidylethanolamine (PtdEtn) from phosphatidylserine (PtdSer). The protein is Phosphatidylserine decarboxylase proenzyme of Shewanella sp. (strain MR-4).